Consider the following 414-residue polypeptide: uncharacterized protein (414 aa).

The Lumenal segment spans residues 1–66 (MNPSVPKVMK…LQRISKDYLK (66 aa)). The segment at 20 to 51 (SKEMNDTSLQLPSTTRSLSPKESNSNEDFNVD) is disordered. Over residues 25 to 51 (DTSLQLPSTTRSLSPKESNSNEDFNVD) the composition is skewed to polar residues. A Glycyl lysine isopeptide (Lys-Gly) (interchain with G-Cter in ubiquitin) cross-link involves residue K40. The chain crosses the membrane as a helical span at residues 67 to 87 (PNIGLVLLTVSYFFNSAMVVS). Residues 78-215 (YFFNSAMVVS…SLLGVVLIVR (138 aa)) form the EamA 1 domain. The Cytoplasmic segment spans residues 88–106 (TKVLENDPDDIANDRQIKP). Residues 107–127 (LQILLVRMVITYIGTLIYMYI) form a helical membrane-spanning segment. Residues 128 to 144 (NKSTISDVPFGKPEVRK) are Lumenal-facing. The chain crosses the membrane as a helical span at residues 145–167 (WLVLRGCTGFFGVFGMYYSLMYL). Topologically, residues 168–171 (TISD) are cytoplasmic. The chain crosses the membrane as a helical span at residues 172–191 (AVLITFLAPSLTIFLSWVIL). Topologically, residues 192-199 (RERFTKVE) are lumenal. The chain crosses the membrane as a helical span at residues 200 to 220 (ALGSLISLLGVVLIVRPSFLF). Topologically, residues 221–241 (GTPELTDSSSQIVESSDPKSR) are cytoplasmic. The chain crosses the membrane as a helical span at residues 242–262 (LIATLVGLWGVLGMSCVYIII). The EamA 2 domain occupies 253 to 379 (LGMSCVYIII…IISATLWVIR (127 aa)). Residues 263–269 (RYIGKRA) are Lumenal-facing. Residues 270–290 (HAIMSVSYFSLITAIVSFIGI) form a helical membrane-spanning segment. The Cytoplasmic segment spans residues 291–307 (NTIPSMKFQIPHSKKQW). Residues 308-328 (ILFGNLGVSGFIFQLLLTMGI) form a helical membrane-spanning segment. Residues 329-357 (QRERAGRGSLMTYTQLLYAVFWDVALYKH) are Lumenal-facing. The helical transmembrane segment at 358–378 (WPNIWSWIGMIIIISATLWVI) threads the bilayer. Residues 379-414 (RIRAANNETTAKDLTPIIDDEENSIPLTEFDLSDSK) lie on the Cytoplasmic side of the membrane.

To yeast YPL264c.

The protein resides in the membrane. This is an uncharacterized protein from Saccharomyces cerevisiae (strain ATCC 204508 / S288c) (Baker's yeast).